A 141-amino-acid chain; its full sequence is Hemoglobin subunit alpha-D (141 aa).

A Globin domain is found at 1 to 141 (VLTAEDRRLL…VADVLCEKYR (141 aa)). Heme b is bound by residues Gln-58 and His-87.

Belongs to the globin family. In terms of assembly, heterotetramer of two alpha chains and two beta chains. Red blood cells.

Its function is as follows. Involved in oxygen transport from the lung to the various peripheral tissues. The protein is Hemoglobin subunit alpha-D of Drymarchon melanurus erebennus (Texas indigo snake).